The chain runs to 405 residues: Acetate kinase (405 aa).

N7 contacts Mg(2+). ATP is bound at residue K14. R91 is a substrate binding site. Residue D148 is the Proton donor/acceptor of the active site. ATP-binding positions include 208 to 212 and 283 to 285; these read HLGNG and DFR. E384 contributes to the Mg(2+) binding site.

It belongs to the acetokinase family. In terms of assembly, homodimer. Requires Mg(2+) as cofactor. It depends on Mn(2+) as a cofactor.

The protein resides in the cytoplasm. The enzyme catalyses acetate + ATP = acetyl phosphate + ADP. Its pathway is metabolic intermediate biosynthesis; acetyl-CoA biosynthesis; acetyl-CoA from acetate: step 1/2. In terms of biological role, catalyzes the formation of acetyl phosphate from acetate and ATP. Can also catalyze the reverse reaction. This Dictyoglomus turgidum (strain DSM 6724 / Z-1310) protein is Acetate kinase.